A 253-amino-acid chain; its full sequence is Large ribosomal subunit protein uL4 (253 aa).

It belongs to the universal ribosomal protein uL4 family. In terms of assembly, part of the 50S ribosomal subunit.

One of the primary rRNA binding proteins, this protein initially binds near the 5'-end of the 23S rRNA. It is important during the early stages of 50S assembly. It makes multiple contacts with different domains of the 23S rRNA in the assembled 50S subunit and ribosome. Functionally, forms part of the polypeptide exit tunnel. This Methanococcoides burtonii (strain DSM 6242 / NBRC 107633 / OCM 468 / ACE-M) protein is Large ribosomal subunit protein uL4.